Consider the following 287-residue polypeptide: Putative ABC transporter ATP-binding protein MM_1038 (287 aa).

The ABC transporter domain maps to 5–238 (LENISVFYSR…ENVPLPPVAS (234 aa)). 40–47 (GEKGAGKS) is a binding site for ATP.

The protein belongs to the ABC transporter superfamily.

Its subcellular location is the cell membrane. In terms of biological role, probably part of an ABC transporter complex. Responsible for energy coupling to the transport system. This Methanosarcina mazei (strain ATCC BAA-159 / DSM 3647 / Goe1 / Go1 / JCM 11833 / OCM 88) (Methanosarcina frisia) protein is Putative ABC transporter ATP-binding protein MM_1038.